The sequence spans 221 residues: MFYYTYKITNKINNKIYIGVHSTENLDDGYMGSGKLLKRAQDKYGIENFSKEILEYFDDKESMLEAEKNIVTEEFLNRPDVYNLKLGGEGGWDHVNIPGMLNQKKDASLKGAKSFKSRFENDILLQEKYRKIGSNVFKRLWSTPEYREKFLNNSRFLNKHHTPETINKMKESHAKNNHQKGEKNSQFGMMWIHSLDEKVSKRIKKTDPIPEGWFKGRKMKF.

Residues 1 to 84 (MFYYTYKITN…FLNRPDVYNL (84 aa)) enclose the GIY-YIG domain.

The protein to endonucleases of group I introns of fungi and phage. Mg(2+) serves as cofactor.

Its function is as follows. Probably involved in the movement of the endonuclease-encoding DNA. The protein is Putative endonuclease segB (segB) of Enterobacteria phage T4 (Bacteriophage T4).